Reading from the N-terminus, the 203-residue chain is Peptidyl-tRNA hydrolase (203 aa).

Position 14 (tyrosine 14) interacts with tRNA. Catalysis depends on histidine 19, which acts as the Proton acceptor. 3 residues coordinate tRNA: tyrosine 64, asparagine 66, and asparagine 112.

The protein belongs to the PTH family. Monomer.

It is found in the cytoplasm. The enzyme catalyses an N-acyl-L-alpha-aminoacyl-tRNA + H2O = an N-acyl-L-amino acid + a tRNA + H(+). In terms of biological role, hydrolyzes ribosome-free peptidyl-tRNAs (with 1 or more amino acids incorporated), which drop off the ribosome during protein synthesis, or as a result of ribosome stalling. Its function is as follows. Catalyzes the release of premature peptidyl moieties from peptidyl-tRNA molecules trapped in stalled 50S ribosomal subunits, and thus maintains levels of free tRNAs and 50S ribosomes. This Methylobacterium sp. (strain 4-46) protein is Peptidyl-tRNA hydrolase.